A 118-amino-acid polypeptide reads, in one-letter code: Beta-2-microglobulin (118 aa).

An N-terminal signal peptide occupies residues 1–20 (MARVVALVLLGLLSLTGLEA). Positions 25–111 (PKVQVYSRHP…QHSTLKEPLI (87 aa)) constitute an Ig-like C1-type domain. Cys-45 and Cys-99 are joined by a disulfide.

This sequence belongs to the beta-2-microglobulin family. As to quaternary structure, heterodimer of an alpha chain and a beta chain. Beta-2-microglobulin is the beta-chain of major histocompatibility complex class I molecules.

Its subcellular location is the secreted. In terms of biological role, component of the class I major histocompatibility complex (MHC). Involved in the presentation of peptide antigens to the immune system. In Equus asinus (Donkey), this protein is Beta-2-microglobulin (B2M).